Reading from the N-terminus, the 297-residue chain is UBX domain-containing protein 1 (297 aa).

The residue at position 2 (Ala2) is an N-acetylalanine. The UBA domain maps to 2 to 42 (AELTALESLIEMGFPRGRAEKALALTGNQGIEAAMDWLMEH). The disordered stretch occupies residues 38–212 (WLMEHEDDPD…QEPPTKREYD (175 aa)). The segment covering 42–52 (HEDDPDVDEPL) has biased composition (acidic residues). The interval 43–297 (EDDPDVDEPL…VLIVAKKCPS (255 aa)) is interaction with BRCA1. Composition is skewed to basic and acidic residues over residues 86 to 122 (LTEE…EREK) and 137 to 177 (KLQE…ERAQ). Positions 86-172 (LTEEERQEQT…RVREKIERDK (87 aa)) form a coiled coil. A Phosphoserine modification is found at Ser199. Ser200 bears the Phosphoserine; by MAPK12 mark. A phosphothreonine mark is found at Thr207 and Thr229. The region spanning 209–291 (REYDQCRIQV…GLVPSAVLIV (83 aa)) is the UBX domain. Ser270 bears the Phosphoserine mark.

As to quaternary structure, component of a complex required to couple retrotranslocation, ubiquitination and deglycosylation composed of NGLY1, SAKS1, AMFR, VCP and RAD23B. Interacts with HOMER2. Interacts directly with VCP. Interacts with BRCA1 and BARD1; interaction takes place when BRCA1 is not autoubiquitinated bur is strongly enhanced in the presence of autoubiquitinated BRCA1.

Its subcellular location is the cytoplasm. Its function is as follows. Ubiquitin-binding protein that interacts with the BRCA1-BARD1 heterodimer, and regulates its activity. Specifically binds 'Lys-6'-linked polyubiquitin chains. Interaction with autoubiquitinated BRCA1, leads to inhibit the E3 ubiquitin-protein ligase activity of the BRCA1-BARD1 heterodimer. Component of a complex required to couple deglycosylation and proteasome-mediated degradation of misfolded proteins in the endoplasmic reticulum that are retrotranslocated in the cytosol. This is UBX domain-containing protein 1 (Ubxn1) from Rattus norvegicus (Rat).